We begin with the raw amino-acid sequence, 550 residues long: Arginine--tRNA ligase (550 aa).

The 'HIGH' region signature appears at 130 to 140 (ANPTGPIHIGG).

This sequence belongs to the class-I aminoacyl-tRNA synthetase family. As to quaternary structure, monomer.

The protein localises to the cytoplasm. The catalysed reaction is tRNA(Arg) + L-arginine + ATP = L-arginyl-tRNA(Arg) + AMP + diphosphate. The protein is Arginine--tRNA ligase of Mycolicibacterium paratuberculosis (strain ATCC BAA-968 / K-10) (Mycobacterium paratuberculosis).